Consider the following 316-residue polypeptide: Acetaldehyde dehydrogenase (316 aa).

11–14 is a binding site for NAD(+); sequence SGNI. Cys131 acts as the Acyl-thioester intermediate in catalysis. Residues 162 to 170 and Asn289 contribute to the NAD(+) site; that span reads SAGPGTRAN.

Belongs to the acetaldehyde dehydrogenase family. In terms of assembly, interacts with MhpE.

The enzyme catalyses acetaldehyde + NAD(+) + CoA = acetyl-CoA + NADH + H(+). Its pathway is aromatic compound metabolism; 3-phenylpropanoate degradation. In terms of biological role, catalyzes the conversion of acetaldehyde to acetyl-CoA, using NAD(+) and coenzyme A. Is the final enzyme in the meta-cleavage pathway for the degradation of aromatic compounds. The protein is Acetaldehyde dehydrogenase of Escherichia coli O157:H7.